Reading from the N-terminus, the 187-residue chain is Resolvase OPG149 (187 aa).

The protein belongs to the RuvC family. Poxviruses-type subfamily. It depends on Mg(2+) as a cofactor.

In terms of biological role, plays a role in DNA replication by cleaving viral DNA concatamers to yield unit-length viral genomes. The concatamer junctions contain inverted repeat sequences that can be extruded as cruciforms, yielding Holliday junctions that A22 protein cleaves. The protein is Resolvase OPG149 (OPG149) of Vaccinia virus (strain Western Reserve) (VACV).